The following is a 387-amino-acid chain: MSYRMFDYLVPNVNFFGPNAISVVGERCKLLGGKKALLVTDKGLRAIKDGAVDKTLTHLREAGIDVVVFDGVEPNPKDTNVRDGLEVFRKEHCDIIVTVGGGSPHDCGKGIGIAATHEGDLYSYAGIETLTNPLPPIVAVNTTAGTASEVTRHCVLTNTKTKVKFVIVSWRNLPSVSINDPLLMLGKPAPLTAATGMDALTHAVEAYISKDANPVTDAAAIQAIRLIARNLRQAVALGSNLKARENMAYASLLAGMAFNNANLGYVHAMAHQLGGLYDMPHGVANAVLLPHVARYNLIANPEKFADIAEFMGENTDGLSTMDAAELAIHAIARLSADIGIPQHLRDLGVKEADFPYMAEMALKDGNAFSNPRKGNEKEIAEIFRQAF.

This sequence belongs to the iron-containing alcohol dehydrogenase family. In terms of assembly, homooctamer. The cofactor is Fe cation.

It carries out the reaction propane-1,3-diol + NAD(+) = 3-hydroxypropanal + NADH + H(+). Its activity is regulated as follows. Inhibited by the metal chelator 1,10-phenanthroline. Its function is as follows. Catalyzes the reduction of 3-hydroxypropanal. Is considerably less active with glyceraldehyde, propionaldehyde, acetaldehyde, and butyraldehyde. Also catalyzes the oxidation of various primary, secondary, and tertiary alcohols. Is most active with substrates containing two primary alcohol groups separated by one or two carbon atoms. 1,3-propanediol is the preferred substrate. This Citrobacter freundii protein is 1,3-propanediol dehydrogenase.